The primary structure comprises 126 residues: Large-conductance mechanosensitive channel (126 aa).

A run of 2 helical transmembrane segments spans residues 14–34 and 67–87; these read VIDL…VKSL and GSFL…FILV.

Belongs to the MscL family. In terms of assembly, homopentamer.

The protein resides in the cell membrane. Its function is as follows. Channel that opens in response to stretch forces in the membrane lipid bilayer. May participate in the regulation of osmotic pressure changes within the cell. The polypeptide is Large-conductance mechanosensitive channel (Lactiplantibacillus plantarum (strain ATCC BAA-793 / NCIMB 8826 / WCFS1) (Lactobacillus plantarum)).